Here is a 503-residue protein sequence, read N- to C-terminus: ATP synthase subunit alpha (503 aa).

Residue 170–177 (GDKQTGKT) participates in ATP binding.

The protein belongs to the ATPase alpha/beta chains family. F-type ATPases have 2 components, CF(1) - the catalytic core - and CF(0) - the membrane proton channel. CF(1) has five subunits: alpha(3), beta(3), gamma(1), delta(1), epsilon(1). CF(0) has three main subunits: a(1), b(2) and c(9-12). The alpha and beta chains form an alternating ring which encloses part of the gamma chain. CF(1) is attached to CF(0) by a central stalk formed by the gamma and epsilon chains, while a peripheral stalk is formed by the delta and b chains.

Its subcellular location is the cell inner membrane. The catalysed reaction is ATP + H2O + 4 H(+)(in) = ADP + phosphate + 5 H(+)(out). Functionally, produces ATP from ADP in the presence of a proton gradient across the membrane. The alpha chain is a regulatory subunit. In Helicobacter pylori (strain P12), this protein is ATP synthase subunit alpha.